The primary structure comprises 129 residues: Small ribosomal subunit protein uS11 (129 aa).

Belongs to the universal ribosomal protein uS11 family. In terms of assembly, part of the 30S ribosomal subunit. Interacts with proteins S7 and S18. Binds to IF-3.

Located on the platform of the 30S subunit, it bridges several disparate RNA helices of the 16S rRNA. Forms part of the Shine-Dalgarno cleft in the 70S ribosome. This Geobacillus thermodenitrificans (strain NG80-2) protein is Small ribosomal subunit protein uS11.